Reading from the N-terminus, the 959-residue chain is Glycine dehydrogenase (decarboxylating) (959 aa).

Lysine 704 is modified (N6-(pyridoxal phosphate)lysine).

This sequence belongs to the GcvP family. In terms of assembly, the glycine cleavage system is composed of four proteins: P, T, L and H. Pyridoxal 5'-phosphate is required as a cofactor.

It catalyses the reaction N(6)-[(R)-lipoyl]-L-lysyl-[glycine-cleavage complex H protein] + glycine + H(+) = N(6)-[(R)-S(8)-aminomethyldihydrolipoyl]-L-lysyl-[glycine-cleavage complex H protein] + CO2. Functionally, the glycine cleavage system catalyzes the degradation of glycine. The P protein binds the alpha-amino group of glycine through its pyridoxal phosphate cofactor; CO(2) is released and the remaining methylamine moiety is then transferred to the lipoamide cofactor of the H protein. This is Glycine dehydrogenase (decarboxylating) from Parasynechococcus marenigrum (strain WH8102).